A 341-amino-acid polypeptide reads, in one-letter code: GTP-binding protein GTR2 (341 aa).

Ser23, Ser24, Ser43, His124, and Asp127 together coordinate GTP.

This sequence belongs to the GTR/RAG GTP-binding protein family. As to quaternary structure, heterodimer; with GTR1. Component of the GSE complex composed of GTR1, GTR2, SLM4, MEH1 and LTV1. Component of the EGO complex, at least composed of GTR2, SLM4 and MEH1. Interacts with GTR1; the interaction is direct.

It localises to the vacuole membrane. It carries out the reaction GTP + H2O = GDP + phosphate + H(+). In terms of biological role, GTPase involved in activation of the TORC1 signaling pathway, which promotes growth and represses autophagy in nutrient-rich conditions. Also required for TORC1 inactivation during nitrogen starvation. Required for intracellular sorting of GAP1 out of the endosome. Involved in the regulation of microautophagy. The chain is GTP-binding protein GTR2 from Saccharomyces cerevisiae (strain ATCC 204508 / S288c) (Baker's yeast).